The sequence spans 881 residues: Low-affinity phosphate transporter PHO90 (881 aa).

In terms of domain architecture, SPX spans 1–288 (MRFSHFLKYN…HLNTRTELIE (288 aa)). 12 helical membrane passes run 417-437 (IYFI…NDAA), 456-476 (AIPL…FKVL), 493-513 (ILAA…TLGE), 514-534 (VLAQ…FAGC), 539-559 (VLLM…NVAA), 581-601 (AQAL…SSPI), 663-683 (FTVK…LWCV), 691-711 (FGSS…TGLL), 718-738 (AFPW…KAVS), 758-778 (GVFA…TFVS), 805-825 (ILVF…SSGF), and 854-874 (ASIL…ASVV).

This sequence belongs to the CitM (TC 2.A.11) transporter family.

It is found in the membrane. Functionally, low-affinity phosphate transporter involved in the control of cellular phosphate levels. The polypeptide is Low-affinity phosphate transporter PHO90 (PHO90) (Saccharomyces cerevisiae (strain ATCC 204508 / S288c) (Baker's yeast)).